A 721-amino-acid polypeptide reads, in one-letter code: Catalase-peroxidase 1 (721 aa).

The tryptophyl-tyrosyl-methioninium (Trp-Tyr) (with M-249) cross-link spans 98–223; that stretch reads WHAAGSYRVA…LAAVQMGLIY (126 aa). Catalysis depends on histidine 99, which acts as the Proton acceptor. Residues 223 to 249 constitute a cross-link (tryptophyl-tyrosyl-methioninium (Tyr-Met) (with W-98)); it reads YVNPEGVNGQPDPLRTAQDVRVTFGRM. Histidine 264 provides a ligand contact to heme b.

This sequence belongs to the peroxidase family. Peroxidase/catalase subfamily. In terms of assembly, homodimer or homotetramer. Heme b serves as cofactor. Post-translationally, formation of the three residue Trp-Tyr-Met cross-link is important for the catalase, but not the peroxidase activity of the enzyme.

It catalyses the reaction H2O2 + AH2 = A + 2 H2O. The enzyme catalyses 2 H2O2 = O2 + 2 H2O. In terms of biological role, bifunctional enzyme with both catalase and broad-spectrum peroxidase activity. This Legionella pneumophila (strain Corby) protein is Catalase-peroxidase 1.